The chain runs to 159 residues: Protein Smg homolog (159 aa).

The protein belongs to the Smg family.

The polypeptide is Protein Smg homolog (Vibrio vulnificus (strain CMCP6)).